Consider the following 131-residue polypeptide: Aspartate 1-decarboxylase (131 aa).

Residue S25 is the Schiff-base intermediate with substrate; via pyruvic acid of the active site. S25 is modified (pyruvic acid (Ser)). Position 57 (T57) interacts with substrate. The Proton donor role is filled by Y58. 73-75 (GAA) lines the substrate pocket.

The protein belongs to the PanD family. As to quaternary structure, heterooctamer of four alpha and four beta subunits. The cofactor is pyruvate. Is synthesized initially as an inactive proenzyme, which is activated by self-cleavage at a specific serine bond to produce a beta-subunit with a hydroxyl group at its C-terminus and an alpha-subunit with a pyruvoyl group at its N-terminus.

Its subcellular location is the cytoplasm. It catalyses the reaction L-aspartate + H(+) = beta-alanine + CO2. It participates in cofactor biosynthesis; (R)-pantothenate biosynthesis; beta-alanine from L-aspartate: step 1/1. Functionally, catalyzes the pyruvoyl-dependent decarboxylation of aspartate to produce beta-alanine. The polypeptide is Aspartate 1-decarboxylase (Anaeromyxobacter sp. (strain Fw109-5)).